Consider the following 156-residue polypeptide: ATP synthase subunit b', organellar chromatophore (156 aa).

The chain crosses the membrane as a helical span at residues 23-43 (TLPLMAIQVVFLTFILNAIFF).

Belongs to the ATPase B chain family. F-type ATPases have 2 components, F(1) - the catalytic core - and F(0) - the membrane proton channel. F(1) has five subunits: alpha(3), beta(3), gamma(1), delta(1), epsilon(1). F(0) has four main subunits: a(1), b(1), b'(1) and c(10-14). The alpha and beta chains form an alternating ring which encloses part of the gamma chain. F(1) is attached to F(0) by a central stalk formed by the gamma and epsilon chains, while a peripheral stalk is formed by the delta, b and b' chains.

The protein localises to the plastid. It is found in the organellar chromatophore thylakoid membrane. In terms of biological role, f(1)F(0) ATP synthase produces ATP from ADP in the presence of a proton or sodium gradient. F-type ATPases consist of two structural domains, F(1) containing the extramembraneous catalytic core and F(0) containing the membrane proton channel, linked together by a central stalk and a peripheral stalk. During catalysis, ATP synthesis in the catalytic domain of F(1) is coupled via a rotary mechanism of the central stalk subunits to proton translocation. Its function is as follows. Component of the F(0) channel, it forms part of the peripheral stalk, linking F(1) to F(0). The b'-subunit is a diverged and duplicated form of b found in plants and photosynthetic bacteria. This is ATP synthase subunit b', organellar chromatophore from Paulinella chromatophora.